A 515-amino-acid chain; its full sequence is Fatty acyl-CoA reductase 1 (515 aa).

At 1–465 (MVSIPEYYEG…ARKHLNKLRN (465 aa)) the chain is on the cytoplasmic side. The interval 451 to 507 (SGLPAARKHLNKLRNIRYGFNTILVILIWRIFIARSQMARNIWYFVVSLCYKFLSYF) is necessary and sufficient for PEX19-mediated localization into peroxisome membrane. A helical transmembrane segment spans residues 466–483 (IRYGFNTILVILIWRIFI). The Peroxisomal portion of the chain corresponds to 484-515 (ARSQMARNIWYFVVSLCYKFLSYFRASSTMRY).

It belongs to the fatty acyl-CoA reductase family. Interacts with PEX19; PEX19 mediates the targeting of FAR1 to peroxisomes.

The protein resides in the peroxisome membrane. The enzyme catalyses a long-chain fatty acyl-CoA + 2 NADPH + 2 H(+) = a long-chain primary fatty alcohol + 2 NADP(+) + CoA. The catalysed reaction is hexadecanoyl-CoA + 2 NADPH + 2 H(+) = hexadecan-1-ol + 2 NADP(+) + CoA. It catalyses the reaction octadecanoyl-CoA + 2 NADPH + 2 H(+) = octadecan-1-ol + 2 NADP(+) + CoA. It carries out the reaction (9Z)-octadecenoyl-CoA + 2 NADPH + 2 H(+) = (9Z)-octadecen-1-ol + 2 NADP(+) + CoA. The enzyme catalyses (9Z,12Z)-octadecadienoyl-CoA + 2 NADPH + 2 H(+) = (9Z,12Z)-octadecadien-1-ol + 2 NADP(+) + CoA. The catalysed reaction is eicosanoyl-CoA + 2 NADPH + 2 H(+) = eicosan-1-ol + 2 NADP(+) + CoA. It catalyses the reaction 16-methylheptadecanoyl-CoA + 2 NADPH + 2 H(+) = 16-methylheptadecan-1-ol + 2 NADP(+) + CoA. It carries out the reaction 18-methylnonadecanoyl-CoA + 2 NADPH + 2 H(+) = 18-methylnonadecan-1-ol + 2 NADP(+) + CoA. Catalyzes the reduction of saturated and unsaturated C16 or C18 fatty acyl-CoA to fatty alcohols. It plays an essential role in the production of ether lipids/plasmalogens which synthesis requires fatty alcohols. In parallel, it is also required for wax monoesters production since fatty alcohols also constitute a substrate for their synthesis. Functionally, catalyzes the reduction of saturated and unsaturated C16 or C18 fatty acyl-CoA to fatty alcohols. It plays an essential role in the production of ether lipids/plasmalogens which synthesis requires fatty alcohols. In parallel, it is also required for wax monoesters production since fatty alcohols also constitute a substrate for their synthesis. The polypeptide is Fatty acyl-CoA reductase 1 (Rattus norvegicus (Rat)).